Consider the following 80-residue polypeptide: Small ribosomal subunit protein bS16 (80 aa).

Belongs to the bacterial ribosomal protein bS16 family.

The protein is Small ribosomal subunit protein bS16 of Wigglesworthia glossinidia brevipalpis.